The primary structure comprises 439 residues: MFFHGTSRVNGKGHLEIGGVDTVELANLYGTPLFVYDVALIRERAKDFKQAFADEGVQAQVAYASKAFSCIAMFQLAEELGLSLDVVSGGELYTAQQAGVSMERIHFHGNNKSRAEIEMAVEAGIGCFVVDNFYELDLLADICEQKRATANILLRITPGVEAHTHDYISTGQEDSKFGFDLVSGQATLAVKKALAVDSIHLLGVHSHIGSQIFETTGFVMAVEKIFEHLVTWREDHGFEPSVLNLGGGFGIRYIEGDTPRPVGDYVKEMIRAVKQQIAEHEMSMPEIWIEPGRSLVGDAGTTLYTIGSRKEIPNVRHYLSVDGGMSDNLRPALYQAEYEGALANRVNEQPVGMFSVAGKCCESGDMLIWDLPLPEANHEDILAVFCTGAYGYSMANNYNRIPRPPVVFVEDGDAQLVIQRERYEDLVRLDMPLVKKVKV.

An N6-(pyridoxal phosphate)lysine modification is found at Lys66. Pyridoxal 5'-phosphate is bound by residues Gly248 and 290–293; that span reads EPGR. Residues Arg293, Arg330, and Tyr334 each coordinate substrate. Cys361 acts as the Proton donor in catalysis. 2 residues coordinate substrate: Glu362 and Tyr390. A pyridoxal 5'-phosphate-binding site is contributed by Tyr390.

Belongs to the Orn/Lys/Arg decarboxylase class-II family. LysA subfamily. In terms of assembly, homodimer. Pyridoxal 5'-phosphate is required as a cofactor.

It carries out the reaction meso-2,6-diaminopimelate + H(+) = L-lysine + CO2. It participates in amino-acid biosynthesis; L-lysine biosynthesis via DAP pathway; L-lysine from DL-2,6-diaminopimelate: step 1/1. Specifically catalyzes the decarboxylation of meso-diaminopimelate (meso-DAP) to L-lysine. This chain is Diaminopimelate decarboxylase, found in Halalkalibacterium halodurans (strain ATCC BAA-125 / DSM 18197 / FERM 7344 / JCM 9153 / C-125) (Bacillus halodurans).